An 82-amino-acid polypeptide reads, in one-letter code: MSASKILVGCWLGLAVLSVSTVLLGNAGATLALAAGVLLAAFGKAWLITDGFMELRHAPPAWRLLLLGWPLLMAIGVLLTLL.

The next 3 membrane-spanning stretches (helical) occupy residues 1–21, 22–42, and 62–82; these read MSASKILVGCWLGLAVLSVST, VLLGNAGATLALAAGVLLAAF, and WRLLLLGWPLLMAIGVLLTLL.

The protein resides in the cell membrane. This is an uncharacterized protein from Stutzerimonas stutzeri (Pseudomonas stutzeri).